A 184-amino-acid chain; its full sequence is Urease accessory protein UreE (184 aa).

A disordered region spans residues 147 to 184 (EHHGHSHSHSHSHDHDHDHDHDHQHGPSCSHGHHHGHR). Residues 157–171 (HSHDHDHDHDHDHQH) are compositionally biased toward basic and acidic residues.

This sequence belongs to the UreE family.

The protein resides in the cytoplasm. Its function is as follows. Involved in urease metallocenter assembly. Binds nickel. Probably functions as a nickel donor during metallocenter assembly. This chain is Urease accessory protein UreE, found in Burkholderia mallei (strain ATCC 23344).